The primary structure comprises 607 residues: Zinc finger CCCH domain-containing protein 66 (607 aa).

2 ANK repeats span residues 57–87 (EERTPLMIAALFGSKEVVDYIISTGLVDVNR) and 92–124 (DGATALHCAVSGLSANSLEIVTLLLKGSANPDS). Positions 161–178 (LNEVNGQEESEPEVEVEV) are enriched in acidic residues. A disordered region spans residues 161–193 (LNEVNGQEESEPEVEVEVEVSPPRGSERKEYPV). 2 C3H1-type zinc fingers span residues 254 to 276 (PCPEFRKGSCSRGDTCEYAHGIF) and 284 to 308 (QYRTRLCKDETNCSRRVCFFAHKPE). The disordered stretch occupies residues 342-363 (ISPLPIGATTTPPLSPNGVSSP). Over residues 349 to 361 (ATTTPPLSPNGVS) the composition is skewed to polar residues.

This Arabidopsis thaliana (Mouse-ear cress) protein is Zinc finger CCCH domain-containing protein 66.